Here is an 872-residue protein sequence, read N- to C-terminus: Eukaryotic translation initiation factor 3 subunit C (872 aa).

A disordered region spans residues 1-100 (MSRFFRGGDD…KVKSAKDKRF (100 aa)). 2 stretches are compositionally biased toward acidic residues: residues 16-59 (SSEE…DEEE) and 72-87 (SDDE…SDDE). Basic and acidic residues predominate over residues 88-100 (ATTKVKSAKDKRF). In terms of domain architecture, PCI spans 613–787 (FHMHINLELL…ETVIFRKGVE (175 aa)). The interval 812 to 872 (TLEQKTQGSA…GGALGNAVRG (61 aa)) is disordered. Gly residues predominate over residues 831–848 (GGGQRGGGQRGGRGGART).

Belongs to the eIF-3 subunit C family. Component of the eukaryotic translation initiation factor 3 (eIF-3) complex.

It is found in the cytoplasm. Component of the eukaryotic translation initiation factor 3 (eIF-3) complex, which is involved in protein synthesis of a specialized repertoire of mRNAs and, together with other initiation factors, stimulates binding of mRNA and methionyl-tRNAi to the 40S ribosome. The eIF-3 complex specifically targets and initiates translation of a subset of mRNAs involved in cell proliferation. The chain is Eukaryotic translation initiation factor 3 subunit C (nip-1) from Neurospora crassa (strain ATCC 24698 / 74-OR23-1A / CBS 708.71 / DSM 1257 / FGSC 987).